The sequence spans 429 residues: Transcriptional adapter 3 (429 aa).

The stretch at 41–70 (IEELDTLQLELETLLSSASRRLRALEEQRQ) forms a coiled coil. Disordered stretches follow at residues 86–132 (KLEK…TKVQ), 208–257 (EERR…PFGP), and 274–308 (PMED…HTRS). 2 stretches are compositionally biased toward basic and acidic residues: residues 208–221 (EERR…DKKK) and 230–249 (LDAK…HEPP). The stretch at 364-404 (LLKLAREEMRKQELRQRVRVADNEVMEAFRRIMAARQKKRT) forms a coiled coil.

The protein belongs to the NGG1 family.

The protein resides in the nucleus. Functions as a component of the PCAF complex. The PCAF complex is capable of efficiently acetylating histones in a nucleosomal context. This chain is Transcriptional adapter 3 (tada3), found in Danio rerio (Zebrafish).